The primary structure comprises 72 residues: MTLWVGILVGVVALLIGVALGFFIARKYMMSYLKKNPPINEQMLRMMMMQMGMKPSQKKINQMMKAMNNQTK.

The chain crosses the membrane as a helical span at residues 4 to 24 (WVGILVGVVALLIGVALGFFI).

This sequence belongs to the UPF0154 family.

Its subcellular location is the membrane. The polypeptide is UPF0154 protein YneF (yneF) (Bacillus subtilis (strain 168)).